We begin with the raw amino-acid sequence, 118 residues long: Large ribosomal subunit protein bL20 (118 aa).

This sequence belongs to the bacterial ribosomal protein bL20 family.

Binds directly to 23S ribosomal RNA and is necessary for the in vitro assembly process of the 50S ribosomal subunit. It is not involved in the protein synthesizing functions of that subunit. This is Large ribosomal subunit protein bL20 from Nostoc punctiforme (strain ATCC 29133 / PCC 73102).